Here is a 400-residue protein sequence, read N- to C-terminus: DNA primase large subunit PriL (400 aa).

Positions 247, 356, 367, and 373 each coordinate [4Fe-4S] cluster.

This sequence belongs to the eukaryotic-type primase large subunit family. Heterodimer of a small subunit (PriS) and a large subunit (PriL). Requires [4Fe-4S] cluster as cofactor.

Functionally, regulatory subunit of DNA primase, an RNA polymerase that catalyzes the synthesis of short RNA molecules used as primers for DNA polymerase during DNA replication. Stabilizes and modulates the activity of the small subunit, increasing the rate of DNA synthesis, and conferring RNA synthesis capability. The DNA polymerase activity may enable DNA primase to also catalyze primer extension after primer synthesis. May also play a role in DNA repair. The chain is DNA primase large subunit PriL from Thermococcus kodakarensis (strain ATCC BAA-918 / JCM 12380 / KOD1) (Pyrococcus kodakaraensis (strain KOD1)).